We begin with the raw amino-acid sequence, 639 residues long: Cystathionine gamma-synthase (639 aa).

At Lys-443 the chain carries N6-(pyridoxal phosphate)lysine.

This sequence belongs to the trans-sulfuration enzymes family. MET7 subfamily. Requires pyridoxal 5'-phosphate as cofactor.

The protein localises to the cytoplasm. It is found in the nucleus. It carries out the reaction O-succinyl-L-homoserine + L-cysteine = L,L-cystathionine + succinate + H(+). It participates in amino-acid biosynthesis; L-methionine biosynthesis via de novo pathway; L-cystathionine from O-succinyl-L-homoserine: step 1/1. Its function is as follows. Catalyzes the formation of L-cystathionine from O-succinyl-L-homoserine (OSHS) and L-cysteine, via a gamma-replacement reaction. In the absence of thiol, catalyzes gamma-elimination to form 2-oxobutanoate, succinate and ammonia. This is Cystathionine gamma-synthase from Saccharomyces cerevisiae (strain ATCC 204508 / S288c) (Baker's yeast).